Reading from the N-terminus, the 820-residue chain is Phenylalanine--tRNA ligase beta subunit (820 aa).

The tRNA-binding domain maps to 39 to 150; it reads PAPVGGVLLV…GTAAPGTPLR (112 aa). The B5 domain maps to 435 to 510; that stretch reads EVPQTITTTG…RLHGFTELPE (76 aa). Mg(2+) contacts are provided by D488, D494, E497, and E498. The 92-residue stretch at 727 to 818 folds into the FDX-ACB domain; that stretch reads SRAPAAWRDL…AVKARGWAIR (92 aa).

The protein belongs to the phenylalanyl-tRNA synthetase beta subunit family. Type 1 subfamily. In terms of assembly, tetramer of two alpha and two beta subunits. Mg(2+) is required as a cofactor.

It localises to the cytoplasm. It catalyses the reaction tRNA(Phe) + L-phenylalanine + ATP = L-phenylalanyl-tRNA(Phe) + AMP + diphosphate + H(+). The protein is Phenylalanine--tRNA ligase beta subunit (pheT) of Deinococcus radiodurans (strain ATCC 13939 / DSM 20539 / JCM 16871 / CCUG 27074 / LMG 4051 / NBRC 15346 / NCIMB 9279 / VKM B-1422 / R1).